A 236-amino-acid polypeptide reads, in one-letter code: Alanyl-tRNA editing protein AlaX-M (236 aa).

Residues histidine 101, histidine 105, and histidine 205 each contribute to the Zn(2+) site.

It belongs to the class-II aminoacyl-tRNA synthetase family. Editing domain AlaX-M subfamily. Zn(2+) serves as cofactor.

The protein localises to the cytoplasm. Its function is as follows. Functions in trans to edit the amino acid moiety from incorrectly charged Ser-tRNA(Ala). The protein is Alanyl-tRNA editing protein AlaX-M (alaXM) of Saccharolobus solfataricus (strain ATCC 35092 / DSM 1617 / JCM 11322 / P2) (Sulfolobus solfataricus).